Here is an 85-residue protein sequence, read N- to C-terminus: UPF0181 protein YE1782 (85 aa).

Disordered stretches follow at residues 1–22 (MLAG…RIHQ) and 57–85 (DTDF…PYEG). Basic and acidic residues predominate over residues 9 to 21 (SHEEQQEAVERIH). Acidic residues predominate over residues 74–85 (QDADEIEDPYEG).

It belongs to the UPF0181 family.

The polypeptide is UPF0181 protein YE1782 (Yersinia enterocolitica serotype O:8 / biotype 1B (strain NCTC 13174 / 8081)).